The following is a 992-amino-acid chain: Exportin-T (992 aa).

It belongs to the exportin family.

The protein localises to the nucleus. It is found in the cytoplasm. Its function is as follows. tRNA nucleus export receptor which facilitates tRNA translocation across the nuclear pore complex. Involved in pre-tRNA splicing, probably by affecting the interaction of pre-tRNA with splicing endonuclease. The protein is Exportin-T (LOS1) of Scheffersomyces stipitis (strain ATCC 58785 / CBS 6054 / NBRC 10063 / NRRL Y-11545) (Yeast).